The primary structure comprises 189 residues: uncharacterized protein (189 aa).

The first 23 residues, 1-23, serve as a signal peptide directing secretion; the sequence is MIKTTPHKIVILMGILLSPSVFA. A disordered region spans residues 104–125; the sequence is SSPKLIIPQSGDSSSTTSNIGM. Polar residues predominate over residues 113 to 123; that stretch reads SGDSSSTTSNI.

Belongs to the fimbrial protein family.

It is found in the fimbrium. In terms of biological role, part of the yadCKLM-htrE-yadVN fimbrial operon. Could contribute to adhesion to various surfaces in specific environmental niches. This is an uncharacterized protein from Escherichia coli (strain K12).